A 162-amino-acid chain; its full sequence is Ribonuclease H (162 aa).

In terms of domain architecture, RNase H type-1 spans 6–154; that stretch reads DMKRVEIFTD…ADRLANQGVE (149 aa). Mg(2+) contacts are provided by Asp-15, Glu-53, Asp-82, and Asp-146.

This sequence belongs to the RNase H family. Monomer. Requires Mg(2+) as cofactor.

It localises to the cytoplasm. The catalysed reaction is Endonucleolytic cleavage to 5'-phosphomonoester.. Endonuclease that specifically degrades the RNA of RNA-DNA hybrids. This is Ribonuclease H from Nitrosomonas eutropha (strain DSM 101675 / C91 / Nm57).